The chain runs to 223 residues: MPARQSFTDLKNLVLCDIGNTHIHFAQNYQLFSSAKEDLKRLGIQKEIFYISVNEENEKALLNCYPNAKNIAGFFHLETDYIGLGIDRQMACLAVNNGVVVDAGSAITIDLVKEGKHLGGCILPGLAQYIHAYKKSAKILEQPFKTLDSLEILPKNTRDAVNYGMILSVISCIQHLAKNQKIYLCGGDAKYLSAFLPHSVCKERLVFDGMEIALKKAGILECK.

17–24 (DIGNTHIH) lines the ATP pocket. Residues tyrosine 81 and 85–88 (GIDR) contribute to the substrate site. The Proton acceptor role is filled by aspartate 87. A K(+)-binding site is contributed by aspartate 102. Residue serine 105 coordinates ATP. Threonine 157 provides a ligand contact to substrate.

Belongs to the type III pantothenate kinase family. In terms of assembly, homodimer. NH4(+) is required as a cofactor. The cofactor is K(+).

It is found in the cytoplasm. It carries out the reaction (R)-pantothenate + ATP = (R)-4'-phosphopantothenate + ADP + H(+). It functions in the pathway cofactor biosynthesis; coenzyme A biosynthesis; CoA from (R)-pantothenate: step 1/5. Its function is as follows. Catalyzes the phosphorylation of pantothenate (Pan), the first step in CoA biosynthesis. This Helicobacter pylori (strain HPAG1) protein is Type III pantothenate kinase.